We begin with the raw amino-acid sequence, 404 residues long: LL-diaminopimelate aminotransferase (404 aa).

Positions 15 and 42 each coordinate substrate. Residues tyrosine 72, 108–109 (AK), tyrosine 132, asparagine 188, tyrosine 219, and 247–249 (SFS) contribute to the pyridoxal 5'-phosphate site. Substrate contacts are provided by lysine 109, tyrosine 132, and asparagine 188. Lysine 250 is subject to N6-(pyridoxal phosphate)lysine. Residues arginine 258 and asparagine 288 each coordinate pyridoxal 5'-phosphate. 2 residues coordinate substrate: asparagine 288 and arginine 384.

This sequence belongs to the class-I pyridoxal-phosphate-dependent aminotransferase family. LL-diaminopimelate aminotransferase subfamily. In terms of assembly, homodimer. Pyridoxal 5'-phosphate serves as cofactor.

It carries out the reaction (2S,6S)-2,6-diaminopimelate + 2-oxoglutarate = (S)-2,3,4,5-tetrahydrodipicolinate + L-glutamate + H2O + H(+). It participates in amino-acid biosynthesis; L-lysine biosynthesis via DAP pathway; LL-2,6-diaminopimelate from (S)-tetrahydrodipicolinate (aminotransferase route): step 1/1. In terms of biological role, involved in the synthesis of meso-diaminopimelate (m-DAP or DL-DAP), required for both lysine and peptidoglycan biosynthesis. Catalyzes the direct conversion of tetrahydrodipicolinate to LL-diaminopimelate. This chain is LL-diaminopimelate aminotransferase, found in Lachnospira eligens (strain ATCC 27750 / DSM 3376 / VPI C15-48 / C15-B4) (Eubacterium eligens).